A 258-amino-acid polypeptide reads, in one-letter code: uncharacterized protein (258 aa).

Helical transmembrane passes span 38–58, 72–92, and 111–131; these read VFGLLIALICFSNVLCFLFIA, ALIFTLFIPFVTSLLANIIFI, and FLVICAFSSLPIVNIWLMLWW.

The protein localises to the cell membrane. This is an uncharacterized protein from Mycoplasma pneumoniae (strain ATCC 29342 / M129 / Subtype 1) (Mycoplasmoides pneumoniae).